We begin with the raw amino-acid sequence, 548 residues long: uncharacterized protein (548 aa).

One can recognise a DhaL domain in the interval 8–200 (KLFADMIIQG…LLCVYEGFLK (193 aa)).

This is an uncharacterized protein from Staphylococcus aureus (strain bovine RF122 / ET3-1).